Consider the following 275-residue polypeptide: Large ribosomal subunit protein uL2 (275 aa).

Disordered regions lie at residues 28 to 59 and 224 to 275; these read KPFA…GGHK and AMNP…RHKR. Residues 35-49 are compositionally biased toward polar residues; sequence DSQSTTAGRNNNGHI. Positions 50–59 are enriched in basic residues; it reads TTRHKGGGHK.

This sequence belongs to the universal ribosomal protein uL2 family. In terms of assembly, part of the 50S ribosomal subunit. Forms a bridge to the 30S subunit in the 70S ribosome.

Its function is as follows. One of the primary rRNA binding proteins. Required for association of the 30S and 50S subunits to form the 70S ribosome, for tRNA binding and peptide bond formation. It has been suggested to have peptidyltransferase activity; this is somewhat controversial. Makes several contacts with the 16S rRNA in the 70S ribosome. The protein is Large ribosomal subunit protein uL2 of Paraburkholderia xenovorans (strain LB400).